Here is a 182-residue protein sequence, read N- to C-terminus: UPF0397 protein llmg_0343 (182 aa).

The next 5 helical transmembrane spans lie at 8–28, 42–62, 74–94, 114–134, and 146–166; these read IVVA…LINI, AVLA…IGFI, APWW…GFGV, IVQF…GDIL, and QGVV…TLLL.

It belongs to the UPF0397 family.

The protein localises to the cell membrane. This is UPF0397 protein llmg_0343 from Lactococcus lactis subsp. cremoris (strain MG1363).